Consider the following 573-residue polypeptide: Thiol:disulfide interchange protein DsbD (573 aa).

Positions 1–20 are cleaved as a signal peptide; that stretch reads MLKRFFLLLSSLLLVCNVQA. The Periplasmic segment spans residues 21–175; the sequence is GLFNNKPQYL…AENLSNNYLS (155 aa). Disulfide bonds link C121–C126 and C191–C313. The helical transmembrane segment at 176-196 threads the bilayer; the sequence is IFGFLLLGIGLAFTPCVLPML. At 197–227 the chain is on the cytoplasmic side; the sequence is PLLSAIVIGHKNRPNTSRALLLSFTYVQGMA. A helical transmembrane segment spans residues 228–248; that stretch reads LTYTLLGLTVAAIGLPFQVAL. The Periplasmic portion of the chain corresponds to 249-251; the sequence is QSP. Residues 252-272 form a helical membrane-spanning segment; sequence AVLISLAVLFTLLAASMFGLF. The Cytoplasmic segment spans residues 273–292; the sequence is EIRLPNTWQQKLNALSQQQQ. Residues 293–313 traverse the membrane as a helical segment; sequence GGAVGNVFIMGIIAGLVASPC. At 314–331 the chain is on the periplasmic side; sequence TSAPLSGALLYVAQSGNL. A helical transmembrane segment spans residues 332–352; the sequence is LIGGLALYLLALGMGLPLILI. Residues 353–365 lie on the Cytoplasmic side of the membrane; that stretch reads TVFGNQILPKSGE. A helical transmembrane segment spans residues 366–386; sequence WLFKVKTAFGFVMLALPIFLI. Over 387–393 the chain is Periplasmic; that stretch reads SRILPSH. A helical transmembrane segment spans residues 394–414; sequence YEPFLWSTLALAFLGWLISSL. The Cytoplasmic segment spans residues 415–425; it reads NYSTMLKQAVR. A helical transmembrane segment spans residues 426–446; the sequence is ILLFIAFGLTAYPWANLVWQT. The Thioredoxin domain maps to 440–573; sequence ANLVWQTTSN…NQFLAWLNRL (134 aa). Residues 447–573 lie on the Periplasmic side of the membrane; sequence TSNTAQPTTP…NQFLAWLNRL (127 aa). The cysteines at positions 490 and 493 are disulfide-linked.

This sequence belongs to the thioredoxin family. DsbD subfamily.

The protein resides in the cell inner membrane. It carries out the reaction [protein]-dithiol + NAD(+) = [protein]-disulfide + NADH + H(+). It catalyses the reaction [protein]-dithiol + NADP(+) = [protein]-disulfide + NADPH + H(+). Its function is as follows. Required to facilitate the formation of correct disulfide bonds in some periplasmic proteins and for the assembly of the periplasmic c-type cytochromes. Acts by transferring electrons from cytoplasmic thioredoxin to the periplasm. This transfer involves a cascade of disulfide bond formation and reduction steps. This Haemophilus ducreyi (strain 35000HP / ATCC 700724) protein is Thiol:disulfide interchange protein DsbD.